The following is a 457-amino-acid chain: MIIYNTLTRSKELFVPLDVNNVKIYVCGPTVYDFAHIGNSRSIVIYDILFRLLNVLYPKVTYIRNITDIDDKIINVAQNNNQNIYDVTARYIKAFNEDMGRLNCLKPTYEPRATENIDVMLALIEKLINYGHAYIRDNTVFFDIQSYPAYGKLSGRNIMELIYGSRIDIEVGKKHPGDFVLWKPATDIDSKLMSCWPSPWGVGRPGWHIECSAMSYNYLGENFDIHGGGADLQFPHHENELAQSCCAFPNSYYAKYWIHNGFLTVNHEKMSKSLGNFLTVRQLLDSGIRGEVIRYIFLSTHYRKPLDWNDNVVSSAQESLNRIYMALNVTDERLLLDDVEVSDEIISCLKDDMNTPKAIAVLHEMVTRINKASDIDKKVYFIKVLIKSANFLGILHHSWQEWFKVDNDQDIIQLIHERKMAKTNGDFIKADRIRQILLDKGIVLSDNKDGTTLWYRS.

Cys27 is a Zn(2+) binding site. A 'HIGH' region motif is present at residues 29-39 (PTVYDFAHIGN). Positions 211, 236, and 240 each coordinate Zn(2+). Positions 269–273 (KMSKS) match the 'KMSKS' region motif. Lys272 serves as a coordination point for ATP.

Belongs to the class-I aminoacyl-tRNA synthetase family. Monomer. Requires Zn(2+) as cofactor.

Its subcellular location is the cytoplasm. It carries out the reaction tRNA(Cys) + L-cysteine + ATP = L-cysteinyl-tRNA(Cys) + AMP + diphosphate. This chain is Cysteine--tRNA ligase, found in Ehrlichia ruminantium (strain Gardel).